A 441-amino-acid chain; its full sequence is Enolase (441 aa).

Gln164 is a (2R)-2-phosphoglycerate binding site. Catalysis depends on Glu206, which acts as the Proton donor. The Mg(2+) site is built by Asp243, Glu289, and Asp316. Residues Lys341, Arg370, Ser371, and Lys392 each coordinate (2R)-2-phosphoglycerate. Lys341 serves as the catalytic Proton acceptor.

It belongs to the enolase family. It depends on Mg(2+) as a cofactor.

It localises to the cytoplasm. Its subcellular location is the secreted. The protein resides in the cell surface. It carries out the reaction (2R)-2-phosphoglycerate = phosphoenolpyruvate + H2O. The protein operates within carbohydrate degradation; glycolysis; pyruvate from D-glyceraldehyde 3-phosphate: step 4/5. Its function is as follows. Catalyzes the reversible conversion of 2-phosphoglycerate (2-PG) into phosphoenolpyruvate (PEP). It is essential for the degradation of carbohydrates via glycolysis. This chain is Enolase, found in Leuconostoc mesenteroides subsp. mesenteroides (strain ATCC 8293 / DSM 20343 / BCRC 11652 / CCM 1803 / JCM 6124 / NCDO 523 / NBRC 100496 / NCIMB 8023 / NCTC 12954 / NRRL B-1118 / 37Y).